A 488-amino-acid polypeptide reads, in one-letter code: Splicing factor U2AF 65 kDa subunit (488 aa).

Composition is skewed to basic and acidic residues over residues leucine 25–arginine 55 and aspartate 78–phenylalanine 129. The tract at residues leucine 25 to proline 133 is disordered. RRM domains follow at residues arginine 175–aspartate 257, asparagine 282–alanine 359, and glutamate 389–valine 479.

The protein belongs to the splicing factor SR family. In terms of assembly, forms a heterodimer with the U2AF small subunit.

The protein resides in the nucleus. Necessary for the splicing of pre-mRNA. Binds to the polypyrimidine tract of introns early during spliceosome assembly. This is Splicing factor U2AF 65 kDa subunit (uaf-1) from Caenorhabditis briggsae.